The chain runs to 886 residues: Cytosolic carboxypeptidase-like protein 5 (886 aa).

Residues 157–570 (YPFSYSDCQE…AMAIAALDMA (414 aa)) form the Peptidase M14 domain. 2 residues coordinate Zn(2+): H252 and E255. Over residues 344–354 (SQSSSEHQPSS) the composition is skewed to low complexity. The segment at 344–364 (SQSSSEHQPSSCLPPDAPVSD) is disordered. H434 contacts Zn(2+). The Proton donor/acceptor role is filled by E516. Disordered regions lie at residues 605 to 734 (STLN…SSHK) and 784 to 848 (LQAR…FSPI). The span at 631 to 640 (CSENTLSRAR) shows a compositional bias: polar residues. A compositionally biased stretch (low complexity) spans 641-666 (SFSTGTSAGGSSSSQQNSPQMKNSPS). The span at 696-705 (REPRSQDRRR) shows a compositional bias: basic and acidic residues. Positions 714-732 (PAGSLAPSPAPTSSGPASS) are enriched in low complexity. S841 carries the phosphoserine modification.

This sequence belongs to the peptidase M14 family. Zn(2+) serves as cofactor. In terms of tissue distribution, expressed in brain.

The protein resides in the cytoplasm. The protein localises to the cytosol. Its subcellular location is the nucleus. It localises to the cytoskeleton. It is found in the spindle. The protein resides in the midbody. It catalyses the reaction gamma-L-glutamyl-L-glutamyl-[protein] + H2O = L-glutamyl-[protein] + L-glutamate. The catalysed reaction is (L-glutamyl)(n+1)-gamma-L-glutamyl-L-glutamyl-[protein] + H2O = (L-glutamyl)(n)-gamma-L-glutamyl-L-glutamyl-[protein] + L-glutamate. It carries out the reaction C-terminal L-alpha-aminoacyl-L-glutamyl-[tubulin] + H2O = C-terminal L-alpha-aminoacyl-[tubulin] + L-glutamate. The enzyme catalyses C-terminal L-alpha-aminoacyl-L-glutamyl-L-glutamyl-[tubulin] + H2O = C-terminal L-alpha-aminoacyl-L-glutamyl-[tubulin] + L-glutamate. Functionally, metallocarboxypeptidase that mediates deglutamylation of tubulin and non-tubulin target proteins. Catalyzes the removal of polyglutamate side chains present on the gamma-carboxyl group of glutamate residues within the C-terminal tail of alpha- and beta-tubulin. Cleaves alpha- and gamma-linked polyglutamate tubulin side-chain, as well as the branching point glutamate. Also catalyzes the removal of alpha-linked glutamate residues from the carboxy-terminus of alpha-tubulin. Mediates deglutamylation of nucleotidyltransferase CGAS, leading to CGAS antiviral defense response activation. This Homo sapiens (Human) protein is Cytosolic carboxypeptidase-like protein 5.